Reading from the N-terminus, the 99-residue chain is Nucleoid-associated protein UUR10_0100 (99 aa).

It belongs to the YbaB/EbfC family. As to quaternary structure, homodimer.

It is found in the cytoplasm. The protein localises to the nucleoid. Functionally, binds to DNA and alters its conformation. May be involved in regulation of gene expression, nucleoid organization and DNA protection. The chain is Nucleoid-associated protein UUR10_0100 from Ureaplasma urealyticum serovar 10 (strain ATCC 33699 / Western).